The following is a 236-amino-acid chain: UPF0257 lipoprotein YnfC (236 aa).

The signal sequence occupies residues methionine 1–glycine 16. Residue cysteine 17 is the site of N-palmitoyl cysteine attachment. Cysteine 17 carries the S-diacylglycerol cysteine lipid modification.

This sequence belongs to the UPF0257 family.

The protein localises to the cell membrane. The chain is UPF0257 lipoprotein YnfC from Escherichia coli O81 (strain ED1a).